A 636-amino-acid chain; its full sequence is Chaperone protein HtpG (636 aa).

The a; substrate-binding stretch occupies residues 1–342; it reads MSSETLEFQA…AHDLSLNISR (342 aa). The tract at residues 343–558 is b; the sequence is ELLQQDRQIQ…AHDVTPTLEK (216 aa). The interval 559–636 is c; it reads MYRAMGHEVP…ILAERLARTL (78 aa).

This sequence belongs to the heat shock protein 90 family. As to quaternary structure, homodimer.

It localises to the cytoplasm. Functionally, molecular chaperone. Has ATPase activity. This is Chaperone protein HtpG from Salinispora tropica (strain ATCC BAA-916 / DSM 44818 / JCM 13857 / NBRC 105044 / CNB-440).